Reading from the N-terminus, the 523-residue chain is Cysteine-rich secretory protein LCCL domain-containing 1 (523 aa).

The signal sequence occupies residues 1 to 23 (MKYVVQEWLRITTLLFIAQAVSA). The SCP domain occupies 66 to 206 (LDLHNKLRGQ…PKAVYLVCNY (141 aa)). The tract at residues 246–298 (ERPYSPHEPEEETNEIERQRSKAQDATAQSRPRTHSPSGSTGSEDSEKNEVIS) is disordered. Residues 269–288 (QDATAQSRPRTHSPSGSTGS) are compositionally biased toward polar residues. LCCL domains are found at residues 302-397 (MSQI…ANSF) and 403-505 (TVQA…PGKQ). Disulfide bonds link C308/C326, C330/C350, C409/C431, and C435/C458.

It belongs to the CRISP family.

The protein resides in the secreted. In Gallus gallus (Chicken), this protein is Cysteine-rich secretory protein LCCL domain-containing 1 (CRISPLD1).